Consider the following 175-residue polypeptide: ATP synthase subunit delta (175 aa).

This sequence belongs to the ATPase delta chain family. As to quaternary structure, F-type ATPases have 2 components, F(1) - the catalytic core - and F(0) - the membrane proton channel. F(1) has five subunits: alpha(3), beta(3), gamma(1), delta(1), epsilon(1). F(0) has three main subunits: a(1), b(2) and c(10-14). The alpha and beta chains form an alternating ring which encloses part of the gamma chain. F(1) is attached to F(0) by a central stalk formed by the gamma and epsilon chains, while a peripheral stalk is formed by the delta and b chains.

It is found in the cell inner membrane. Functionally, f(1)F(0) ATP synthase produces ATP from ADP in the presence of a proton or sodium gradient. F-type ATPases consist of two structural domains, F(1) containing the extramembraneous catalytic core and F(0) containing the membrane proton channel, linked together by a central stalk and a peripheral stalk. During catalysis, ATP synthesis in the catalytic domain of F(1) is coupled via a rotary mechanism of the central stalk subunits to proton translocation. This protein is part of the stalk that links CF(0) to CF(1). It either transmits conformational changes from CF(0) to CF(1) or is implicated in proton conduction. This is ATP synthase subunit delta from Xanthomonas axonopodis pv. citri (strain 306).